We begin with the raw amino-acid sequence, 872 residues long: Alanine--tRNA ligase (872 aa).

H567, H571, C669, and H673 together coordinate Zn(2+).

This sequence belongs to the class-II aminoacyl-tRNA synthetase family. Requires Zn(2+) as cofactor.

The protein localises to the cytoplasm. The catalysed reaction is tRNA(Ala) + L-alanine + ATP = L-alanyl-tRNA(Ala) + AMP + diphosphate. Catalyzes the attachment of alanine to tRNA(Ala) in a two-step reaction: alanine is first activated by ATP to form Ala-AMP and then transferred to the acceptor end of tRNA(Ala). Also edits incorrectly charged Ser-tRNA(Ala) and Gly-tRNA(Ala) via its editing domain. This is Alanine--tRNA ligase from Streptococcus thermophilus (strain ATCC BAA-491 / LMD-9).